We begin with the raw amino-acid sequence, 342 residues long: Pyrophosphate--fructose 6-phosphate 1-phosphotransferase (342 aa).

Residue Gly-10 participates in diphosphate binding. Glu-103 is a binding site for Mg(2+). Substrate-binding positions include 126–128 (TID), Arg-163, 170–172 (MGR), Glu-222, Arg-266, and 272–275 (HVQR). Asp-128 acts as the Proton acceptor in catalysis.

This sequence belongs to the phosphofructokinase type A (PFKA) family. Mixed-substrate PFK group III subfamily. As to quaternary structure, homodimer or homotetramer. Mg(2+) serves as cofactor.

Its subcellular location is the cytoplasm. It carries out the reaction beta-D-fructose 6-phosphate + diphosphate = beta-D-fructose 1,6-bisphosphate + phosphate + H(+). It functions in the pathway carbohydrate degradation; glycolysis; D-glyceraldehyde 3-phosphate and glycerone phosphate from D-glucose: step 3/4. Its activity is regulated as follows. Non-allosteric. Its function is as follows. Catalyzes the phosphorylation of D-fructose 6-phosphate, the first committing step of glycolysis. Uses inorganic phosphate (PPi) as phosphoryl donor instead of ATP like common ATP-dependent phosphofructokinases (ATP-PFKs), which renders the reaction reversible, and can thus function both in glycolysis and gluconeogenesis. Consistently, PPi-PFK can replace the enzymes of both the forward (ATP-PFK) and reverse (fructose-bisphosphatase (FBPase)) reactions. This chain is Pyrophosphate--fructose 6-phosphate 1-phosphotransferase, found in Streptomyces coelicolor (strain ATCC BAA-471 / A3(2) / M145).